We begin with the raw amino-acid sequence, 49 residues long: Osteocalcin (49 aa).

One can recognise a Gla domain in the interval 1–47 (YLYQWLGAPAPYPDPLEPKREVCELNPDCDELADHIGFQEAYRRFYG). Pro9 carries the 4-hydroxyproline modification. The Ca(2+) site is built by Glu17, Glu21, Glu24, and Asp30. A 4-carboxyglutamate mark is found at Glu17, Glu21, and Glu24. Cys23 and Cys29 are disulfide-bonded.

It belongs to the osteocalcin/matrix Gla protein family. Post-translationally, gamma-carboxyglutamate residues are formed by vitamin K dependent carboxylation by GGCX. These residues are essential for the binding of calcium. Decarboxylation promotes the hormone activity.

It localises to the secreted. The carboxylated form is one of the main organic components of the bone matrix, which constitutes 1-2% of the total bone protein: it acts as a negative regulator of bone formation and is required to limit bone formation without impairing bone resorption or mineralization. The carboxylated form binds strongly to apatite and calcium. Functionally, the uncarboxylated form acts as a hormone secreted by osteoblasts, which regulates different cellular processes, such as energy metabolism, male fertility and brain development. Regulates of energy metabolism by acting as a hormone favoring pancreatic beta-cell proliferation, insulin secretion and sensitivity and energy expenditure. Uncarboxylated osteocalcin hormone also promotes testosterone production in the testes: acts as a ligand for G protein-coupled receptor GPRC6A at the surface of Leydig cells, initiating a signaling response that promotes the expression of enzymes required for testosterone synthesis in a CREB-dependent manner. Also acts as a regulator of brain development: osteocalcin hormone crosses the blood-brain barrier and acts as a ligand for GPR158 on neurons, initiating a signaling response that prevents neuronal apoptosis in the hippocampus, favors the synthesis of all monoamine neurotransmitters and inhibits that of gamma-aminobutyric acid (GABA). Osteocalcin also crosses the placenta during pregnancy and maternal osteocalcin is required for fetal brain development. This chain is Osteocalcin (BGLAP), found in Macaca fascicularis (Crab-eating macaque).